The chain runs to 259 residues: MVIVGFPGDPVDTVILPGGAGVDAARSEPALIDWVKAVSGTARRVVTVCTGAFLAAEAGLLGRTPSDDALGLCRTFRPRISGRSGRCRPDLHAQFAEGVDRGWSHRRHRPRAGTGRRRPRHRDCPDGCPLARPVSAPTRWADPVRGSGVDATRQTDLDPPGAGGHRGRAGGAHRIGELAQRAAMSPRHFTRVFSDEVGEAPGRYVERIRTEAARRQLEETHDTVVAIAARCGFGTAETMRRSFIRRVGISPDQYRKAFA.

Basic residues predominate over residues 104–121 (SHRRHRPRAGTGRRRPRH). The disordered stretch occupies residues 104–170 (SHRRHRPRAG…GAGGHRGRAG (67 aa)). The HTH araC/xylS-type domain maps to 174-257 (RIGELAQRAA…GISPDQYRKA (84 aa)). 2 DNA-binding regions (H-T-H motif) span residues 176 to 197 (GELAQRAAMSPRHFTRVFSDEV) and 224 to 247 (VVAIAARCGFGTAETMRRSFIRRV).

In terms of biological role, controls the expression of genes important for virulence. This Mycobacterium tuberculosis (strain ATCC 25618 / H37Rv) protein is HTH-type transcriptional regulator Rv1931c.